The sequence spans 529 residues: UDP-glucuronosyltransferase 2B11 (529 aa).

Positions methionine 1 to glycine 21 are cleaved as a signal peptide. Lysine 135 bears the N6-succinyllysine mark. Asparagine 315 is a glycosylation site (N-linked (GlcNAc...) asparagine). Residues valine 493–leucine 513 form a helical membrane-spanning segment.

It belongs to the UDP-glycosyltransferase family. Widely expressed.

The protein resides in the microsome membrane. It is found in the endoplasmic reticulum membrane. The catalysed reaction is glucuronate acceptor + UDP-alpha-D-glucuronate = acceptor beta-D-glucuronoside + UDP + H(+). In terms of biological role, UDPGT is of major importance in the conjugation and subsequent elimination of potentially toxic xenobiotics and endogenous compounds. In Homo sapiens (Human), this protein is UDP-glucuronosyltransferase 2B11 (UGT2B11).